Consider the following 202-residue polypeptide: Small ribosomal subunit protein uS5 (202 aa).

Residues 50–113 (LKQEILNINV…REAKLNLTPV (64 aa)) form the S5 DRBM domain.

Belongs to the universal ribosomal protein uS5 family. Part of the 30S ribosomal subunit. Contacts protein S4.

Functionally, with S4 and S12 plays an important role in translational accuracy. The polypeptide is Small ribosomal subunit protein uS5 (Pyrobaculum islandicum (strain DSM 4184 / JCM 9189 / GEO3)).